The primary structure comprises 22 residues: RCCTGKKGSCSGRACKNLKCCA.

Intrachain disulfides connect Cys-2/Cys-15, Cys-3/Cys-20, and Cys-10/Cys-21. At Ala-22 the chain carries Alanine amide.

It belongs to the conotoxin M superfamily. As to expression, expressed by the venom duct.

The protein localises to the secreted. In terms of biological role, mu-conotoxins block voltage-gated sodium channels (Nav). This synthetic toxin potently blocks rNav1.4/SCN4A (IC(50)= 7 nM). It also moderately blocks rNav1.1/SCN1A (IC(50)=370 nM), rNav1.2/SCN2A (IC(50)=1 uM), and mNav1.6/SCN6A (IC(50)=570 nM). It is noteworthy that coexpression of subunits beta-2 or beta-4 (but not beta-1 or beta-3) decrease by more that 10-fold the binding potency of the toxin to rNav1.6. It is also noteworthy that the toxin is 50-fold more potent on mouse Nav1.6 than on rat Nav1.6. In vivo, when injected intraperitoneally or subcutaneously in mice, causes motor impairment, paralysis and death. The polypeptide is Mu-conotoxin SxIIIA (Conus striolatus (Cone snail)).